A 487-amino-acid polypeptide reads, in one-letter code: N-succinylglutamate 5-semialdehyde dehydrogenase (487 aa).

Residue 221-226 (GSSDTG) coordinates NAD(+). Catalysis depends on residues Glu-244 and Cys-278.

This sequence belongs to the aldehyde dehydrogenase family. AstD subfamily.

The enzyme catalyses N-succinyl-L-glutamate 5-semialdehyde + NAD(+) + H2O = N-succinyl-L-glutamate + NADH + 2 H(+). Its pathway is amino-acid degradation; L-arginine degradation via AST pathway; L-glutamate and succinate from L-arginine: step 4/5. Its function is as follows. Catalyzes the NAD-dependent reduction of succinylglutamate semialdehyde into succinylglutamate. The sequence is that of N-succinylglutamate 5-semialdehyde dehydrogenase from Burkholderia vietnamiensis (strain G4 / LMG 22486) (Burkholderia cepacia (strain R1808)).